The primary structure comprises 346 residues: Elongation factor Ts (346 aa).

The involved in Mg(2+) ion dislocation from EF-Tu stretch occupies residues 80–83 (TDFV).

This sequence belongs to the EF-Ts family.

The protein localises to the cytoplasm. Associates with the EF-Tu.GDP complex and induces the exchange of GDP to GTP. It remains bound to the aminoacyl-tRNA.EF-Tu.GTP complex up to the GTP hydrolysis stage on the ribosome. This Streptococcus suis (strain 98HAH33) protein is Elongation factor Ts.